We begin with the raw amino-acid sequence, 728 residues long: Procollagen-lysine,2-oxoglutarate 5-dioxygenase 1 (728 aa).

An N-terminal signal peptide occupies residues 1–18 (MRSLLLLAPLAWLLLVQA). 2 N-linked (GlcNAc...) asparagine glycosylation sites follow: asparagine 198 and asparagine 539. The region spanning 637-728 (QFDLAFVVRY…RYIAVSFVDP (92 aa)) is the Fe2OG dioxygenase domain. Residues histidine 657 and aspartate 659 each contribute to the Fe cation site. A glycan (N-linked (GlcNAc...) asparagine) is linked at asparagine 687. Histidine 709 is a Fe cation binding site. Residue arginine 719 is part of the active site.

Homodimer. Identified in a complex with P3H3 and P3H4. It depends on Fe(2+) as a cofactor. L-ascorbate is required as a cofactor. Highly expressed in the liver, heart, lung, skeletal muscle and kidney.

The protein resides in the rough endoplasmic reticulum membrane. It catalyses the reaction L-lysyl-[collagen] + 2-oxoglutarate + O2 = (5R)-5-hydroxy-L-lysyl-[collagen] + succinate + CO2. Its function is as follows. Part of a complex composed of PLOD1, P3H3 and P3H4 that catalyzes hydroxylation of lysine residues in collagen alpha chains and is required for normal assembly and cross-linkling of collagen fibrils. Forms hydroxylysine residues in -Xaa-Lys-Gly- sequences in collagens. These hydroxylysines serve as sites of attachment for carbohydrate units and are essential for the stability of the intermolecular collagen cross-links. The polypeptide is Procollagen-lysine,2-oxoglutarate 5-dioxygenase 1 (Plod1) (Mus musculus (Mouse)).